The primary structure comprises 876 residues: Alanine--tRNA ligase (876 aa).

Zn(2+)-binding residues include His568, His572, Cys670, and His674.

Belongs to the class-II aminoacyl-tRNA synthetase family. Requires Zn(2+) as cofactor.

It is found in the cytoplasm. The catalysed reaction is tRNA(Ala) + L-alanine + ATP = L-alanyl-tRNA(Ala) + AMP + diphosphate. Functionally, catalyzes the attachment of alanine to tRNA(Ala) in a two-step reaction: alanine is first activated by ATP to form Ala-AMP and then transferred to the acceptor end of tRNA(Ala). Also edits incorrectly charged Ser-tRNA(Ala) and Gly-tRNA(Ala) via its editing domain. The chain is Alanine--tRNA ligase from Anaplasma phagocytophilum (strain HZ).